The primary structure comprises 61 residues: MAVPFRRTSKTVKRKRRTHYKLSAPNLVVCPITKNFTLPHRVTKNSGYYKDKLYLANKKID.

This sequence belongs to the bacterial ribosomal protein bL32 family.

This is Large ribosomal subunit protein bL32 from Phytoplasma mali (strain AT).